Here is a 217-residue protein sequence, read N- to C-terminus: Magnetosome protein MamA (217 aa).

6 TPR repeats span residues 12-44 (VTLYTHYGLSVAKKLGANMVDAFRSAFSVNDDI), 46-79 (QVYYRDKGISHAKAGRYSEAVVMLEQVYDADAFD), 80-113 (VEVALHLGIAYVKTGAVDRGTELLERSIADAPDN), 114-147 (IKVATVLGLTYVQVQKYDLAVPLLVKVAEANPVN), 148-181 (FNVRFRLGVALDNLGRFDEAIDSFKIALGLRPNE), and 182-215 (GKVHRAIAYSYEQMGSHEEALPHFKKANELDERS). Positions 41–112 (NDDIRQVYYR…LERSIADAPD (72 aa)) are N-terminal domain. The interval 113-217 (NIKVATVLGL…ANELDERSAV (105 aa)) is C-terminal domain.

This sequence belongs to the magnetosome MamA family. In terms of assembly, forms round, 20 nm diameter complexes with a central cavity. Probably binds MamC. Interacts with full-length Mms6.

The protein resides in the magnetosome membrane. Probably forms a large homooligomer on which other magnetosome subunits assemble. Required for formation of functional magnetosomes from pre-existing vesicles. This Magnetospirillum gryphiswaldense (strain DSM 6361 / JCM 21280 / NBRC 15271 / MSR-1) protein is Magnetosome protein MamA.